The following is a 231-amino-acid chain: tRNA (guanine-N(1)-)-methyltransferase (231 aa).

Residues Gly109 and 133–138 contribute to the S-adenosyl-L-methionine site; that span reads IGDYVL.

It belongs to the RNA methyltransferase TrmD family. As to quaternary structure, homodimer.

Its subcellular location is the cytoplasm. It carries out the reaction guanosine(37) in tRNA + S-adenosyl-L-methionine = N(1)-methylguanosine(37) in tRNA + S-adenosyl-L-homocysteine + H(+). In terms of biological role, specifically methylates guanosine-37 in various tRNAs. This is tRNA (guanine-N(1)-)-methyltransferase from Nocardia farcinica (strain IFM 10152).